We begin with the raw amino-acid sequence, 513 residues long: Maturase K (513 aa).

This sequence belongs to the intron maturase 2 family. MatK subfamily.

It localises to the plastid. Its subcellular location is the chloroplast. Its function is as follows. Usually encoded in the trnK tRNA gene intron. Probably assists in splicing its own and other chloroplast group II introns. The chain is Maturase K from Molinia caerulea (Purple moor-grass).